We begin with the raw amino-acid sequence, 241 residues long: tRNA pseudouridine synthase A (241 aa).

Residue Asp51 is the Nucleophile of the active site. A substrate-binding site is contributed by Tyr110.

This sequence belongs to the tRNA pseudouridine synthase TruA family. Homodimer.

It carries out the reaction uridine(38/39/40) in tRNA = pseudouridine(38/39/40) in tRNA. Formation of pseudouridine at positions 38, 39 and 40 in the anticodon stem and loop of transfer RNAs. The sequence is that of tRNA pseudouridine synthase A from Campylobacter jejuni subsp. jejuni serotype O:2 (strain ATCC 700819 / NCTC 11168).